Consider the following 192-residue polypeptide: Peptidyl-tRNA hydrolase (192 aa).

Tyr14 contributes to the tRNA binding site. His19 functions as the Proton acceptor in the catalytic mechanism. Positions 64, 66, and 112 each coordinate tRNA.

The protein belongs to the PTH family. As to quaternary structure, monomer.

It localises to the cytoplasm. The catalysed reaction is an N-acyl-L-alpha-aminoacyl-tRNA + H2O = an N-acyl-L-amino acid + a tRNA + H(+). In terms of biological role, hydrolyzes ribosome-free peptidyl-tRNAs (with 1 or more amino acids incorporated), which drop off the ribosome during protein synthesis, or as a result of ribosome stalling. Catalyzes the release of premature peptidyl moieties from peptidyl-tRNA molecules trapped in stalled 50S ribosomal subunits, and thus maintains levels of free tRNAs and 50S ribosomes. This chain is Peptidyl-tRNA hydrolase, found in Anaeromyxobacter sp. (strain K).